Reading from the N-terminus, the 846-residue chain is Spindle pole body component SPC98 (846 aa).

Phosphoserine is present on residues Ser124 and Ser136.

This sequence belongs to the TUBGCP family. Interacts with TUB4, SPC72 and SPC97.

Its subcellular location is the nucleus. It is found in the cytoplasm. The protein resides in the cytoskeleton. It localises to the microtubule organizing center. The protein localises to the spindle pole body. In terms of biological role, involved in microtubule organization by the microtubule organizing center, the spindle pole body (SPB). Probably part of the microtubule attachment site at the SPB. This Saccharomyces cerevisiae (strain ATCC 204508 / S288c) (Baker's yeast) protein is Spindle pole body component SPC98 (SPC98).